A 170-amino-acid chain; its full sequence is MARVEL domain-containing protein 1 (170 aa).

Topologically, residues 1-38 (MEGERPRSDTVTTTVSSHMETISLGGSIAYDRSFLRSP) are cytoplasmic. The region spanning 34 to 167 (FLRSPTGVLL…STYFSFQAWR (134 aa)) is the MARVEL domain. A helical transmembrane segment spans residues 39-59 (TGVLLLMEIMFGLLVWALIAG). Over 60 to 67 (SEYFLFSA) the chain is Extracellular. The helical transmembrane segment at 68 to 88 (FGWVMFVAVFYWVLSVFFFLL) threads the bilayer. The Cytoplasmic segment spans residues 89–102 (HLTRANTRITKVPW). The helical transmembrane segment at 103–123 (SLVGLCFNGSAFVLYLIAAVV) threads the bilayer. The Extracellular segment spans residues 124–145 (EASSVNKDVHQHHNYNSWTASS). A helical transmembrane segment spans residues 146–166 (FFAFIVTVCYALSTYFSFQAW). Residues 167–170 (RTKS) are Cytoplasmic-facing.

The protein localises to the membrane. Its subcellular location is the nucleus. In Xenopus laevis (African clawed frog), this protein is MARVEL domain-containing protein 1 (marveld1).